Reading from the N-terminus, the 356-residue chain is Terpene synthase 10 (356 aa).

The short motif at 90–95 (DDYLDS) is the DDxx(x)D/E motif element. Residues 232–240 (NDAVSYAKE) carry the NDxxSxxxD/E motif motif.

The protein belongs to the terpene synthase family.

The catalysed reaction is geranylgeranyl diphosphate = beta-araneosene + diphosphate. Its function is as follows. Terpene synthase that converts its substrate farnesyl diphosphate (FPP) into several unidentified sesquiterpenes. TPS10 also converts geranylgeranyl diphosphate (GGPP) into the diterpene beta-araneosene. In Dictyostelium purpureum (Slime mold), this protein is Terpene synthase 10.